A 393-amino-acid polypeptide reads, in one-letter code: Sialyltransferase-like protein 1 (393 aa).

Over 1–8 the chain is Cytoplasmic; it reads MKRPLRRP. A helical; Signal-anchor for type II membrane protein membrane pass occupies residues 9–27; sequence FAVLLFVVLCAAASFPSVL. At 28 to 393 the chain is on the lumenal side; sequence RRSVGPAPVL…IAVPPVVFYH (366 aa). Asn-49, Asn-212, and Asn-258 each carry an N-linked (GlcNAc...) asparagine glycan.

It belongs to the glycosyltransferase 29 family.

The protein localises to the golgi apparatus membrane. In terms of biological role, possesses sialyltransferase-like activity in vitro. Transfers sialic acid to the oligosaccharide Gal-beta-1,3-GalNAc and to glycoproteins such as asialofetuin, alpha-1-acid glycoprotein (NeuAc-alpha-2,3-Gal-beta-1,3-GalNAc-) and andasialo-alpha-1-acid glycoprotein. The transferred sialic acid is linked to galactose of Gal-beta-1,3-GalNAc through alpha-2,6-linkage. In Oryza sativa subsp. indica (Rice), this protein is Sialyltransferase-like protein 1.